A 113-amino-acid polypeptide reads, in one-letter code: ATP-dependent Clp protease adapter protein ClpS (113 aa).

The protein belongs to the ClpS family. Binds to the N-terminal domain of the chaperone ClpA.

In terms of biological role, involved in the modulation of the specificity of the ClpAP-mediated ATP-dependent protein degradation. The chain is ATP-dependent Clp protease adapter protein ClpS from Leptospira biflexa serovar Patoc (strain Patoc 1 / Ames).